Here is a 38-residue protein sequence, read N- to C-terminus: Mu-agatoxin-Hc1c (38 aa).

4 cysteine pairs are disulfide-bonded: Cys3/Cys19, Cys10/Cys24, Cys18/Cys34, and Cys26/Cys32. Ser38 is subject to Serine amide.

It belongs to the neurotoxin 07 (Beta/delta-agtx) family. 02 (aga-3) subfamily. In terms of tissue distribution, expressed by the venom gland.

The protein resides in the secreted. Insecticidal neurotoxin that induces irreversible neuromuscular blockade in house crickets (A.domesticus). Modifies presynaptic voltage-gated sodium channels (Nav), causing them to open at the normal resting potential of the nerve. This leads to spontaneous release of neurotransmitter and repetitive action potentials in motor neurons. This Hololena curta (Funnel-web spider) protein is Mu-agatoxin-Hc1c.